We begin with the raw amino-acid sequence, 192 residues long: I-Kappa-B like protein H1 (192 aa).

3 ANK repeats span residues 94 to 126 (KGAQCTHIIATSNVSCSIDMMNIVLQLGADING), 131 to 161 (AGLTPLHICVNKKNYALAEWLCQAPGIDVKV), and 165 to 192 (GKETPYDLACKMEDRKMMKIFEERSKKM).

It belongs to the polydnaviridae I-Kappa-B-like protein family.

Suppresses the host immune response through NF-kappa-B inactivation. Possesses ankyrin repeat domains required for NF-kappa-B binding but lacks the regulatory regions required for dissociation from NF-kappa-B and degradation. Therefore, prevents host NF-kappa-B release and subsequent activation. This Microplitis demolitor bracovirus (isolate Webb) (MdBV) protein is I-Kappa-B like protein H1 (H4).